We begin with the raw amino-acid sequence, 212 residues long: Imidazole glycerol phosphate synthase subunit HisH 2 (212 aa).

Positions 4–211 constitute a Glutamine amidotransferase type-1 domain; it reads HLGLIDYGMG…LDWLQRGAPI (208 aa). The Nucleophile role is filled by Cys-82. Residues His-186 and Glu-188 contribute to the active site.

In terms of assembly, heterodimer of HisH and HisF.

Its subcellular location is the cytoplasm. The catalysed reaction is 5-[(5-phospho-1-deoxy-D-ribulos-1-ylimino)methylamino]-1-(5-phospho-beta-D-ribosyl)imidazole-4-carboxamide + L-glutamine = D-erythro-1-(imidazol-4-yl)glycerol 3-phosphate + 5-amino-1-(5-phospho-beta-D-ribosyl)imidazole-4-carboxamide + L-glutamate + H(+). It carries out the reaction L-glutamine + H2O = L-glutamate + NH4(+). It participates in amino-acid biosynthesis; L-histidine biosynthesis; L-histidine from 5-phospho-alpha-D-ribose 1-diphosphate: step 5/9. In terms of biological role, IGPS catalyzes the conversion of PRFAR and glutamine to IGP, AICAR and glutamate. The HisH subunit provides the glutamine amidotransferase activity that produces the ammonia necessary to HisF for the synthesis of IGP and AICAR. This chain is Imidazole glycerol phosphate synthase subunit HisH 2 (hisH2), found in Parasynechococcus marenigrum (strain WH8102).